Consider the following 556-residue polypeptide: Peptide chain release factor 3 (556 aa).

In terms of domain architecture, tr-type G spans 28–297 (QQRRNFAIIS…AFLDYALKPG (270 aa)). Residues 37-44 (SHPDAGKT), 105-109 (DTPGH), and 159-162 (NKMD) each bind GTP.

This sequence belongs to the TRAFAC class translation factor GTPase superfamily. Classic translation factor GTPase family. PrfC subfamily.

The protein resides in the cytoplasm. In terms of biological role, increases the formation of ribosomal termination complexes and stimulates activities of RF-1 and RF-2. It binds guanine nucleotides and has strong preference for UGA stop codons. It may interact directly with the ribosome. The stimulation of RF-1 and RF-2 is significantly reduced by GTP and GDP, but not by GMP. The sequence is that of Peptide chain release factor 3 from Synechococcus elongatus (strain ATCC 33912 / PCC 7942 / FACHB-805) (Anacystis nidulans R2).